Reading from the N-terminus, the 189-residue chain is Chitin synthase 3 (189 aa).

It belongs to the chitin synthase family. Class II subfamily.

The protein resides in the cell membrane. It catalyses the reaction [(1-&gt;4)-N-acetyl-beta-D-glucosaminyl](n) + UDP-N-acetyl-alpha-D-glucosamine = [(1-&gt;4)-N-acetyl-beta-D-glucosaminyl](n+1) + UDP + H(+). In terms of biological role, polymerizes chitin, a structural polymer of the cell wall and septum, by transferring the sugar moiety of UDP-GlcNAc to the non-reducing end of the growing chitin polymer. This Ajellomyces capsulatus (Darling's disease fungus) protein is Chitin synthase 3 (CHS3).